The sequence spans 556 residues: Urocanate hydratase (556 aa).

NAD(+) is bound by residues 53 to 54 (GG), Q131, 177 to 179 (GMG), E197, 243 to 244 (NA), 264 to 268 (QTSAH), 274 to 275 (YL), and Y323. Residue C411 is part of the active site. G493 contacts NAD(+).

It belongs to the urocanase family. The cofactor is NAD(+).

Its subcellular location is the cytoplasm. The enzyme catalyses 4-imidazolone-5-propanoate = trans-urocanate + H2O. It participates in amino-acid degradation; L-histidine degradation into L-glutamate; N-formimidoyl-L-glutamate from L-histidine: step 2/3. In terms of biological role, catalyzes the conversion of urocanate to 4-imidazolone-5-propionate. The chain is Urocanate hydratase from Pseudomonas fluorescens (strain SBW25).